The primary structure comprises 56 residues: Large ribosomal subunit protein bL33B (56 aa).

The protein belongs to the bacterial ribosomal protein bL33 family.

The sequence is that of Large ribosomal subunit protein bL33B from Cutibacterium acnes (strain DSM 16379 / KPA171202) (Propionibacterium acnes).